The sequence spans 394 residues: Deoxyguanosinetriphosphate triphosphohydrolase-like protein (394 aa).

Positions 1–34 (MSSSPFFVPRAPYAEDPAKSRGRRFPEDESRTRT) are disordered. The span at 16-34 (DPAKSRGRRFPEDESRTRT) shows a compositional bias: basic and acidic residues. The HD domain occupies 70 to 210 (RLTHSLEVAQ…AALADDIAYN (141 aa)).

Belongs to the dGTPase family. Type 2 subfamily.

In Caulobacter sp. (strain K31), this protein is Deoxyguanosinetriphosphate triphosphohydrolase-like protein.